The chain runs to 323 residues: uncharacterized protein (323 aa).

Disordered regions lie at residues 185–214 (AELMKSEDSPEKDEETLRREERKQKEGSSW) and 271–294 (GNIISQKDNPPKSDSDDEDDYEKL).

The protein belongs to the IGBP1/TAP42 family.

This is an uncharacterized protein from Schizosaccharomyces pombe (strain 972 / ATCC 24843) (Fission yeast).